The chain runs to 104 residues: Putative zinc finger protein ORF104b (104 aa).

The segment at 62–85 adopts a C2H2-type zinc-finger fold; that stretch reads YECKYCHTRYLSHTGIVYHLEREH.

The protein is Putative zinc finger protein ORF104b of Acidianus sp. F28 (AFV-2).